The chain runs to 58 residues: Ferredoxin-2 (58 aa).

4Fe-4S ferredoxin-type domains lie at 2-27 and 30-58; these read IEVN…MNEE and KAVV…IVRS. Residue Cys-8 participates in [3Fe-4S] cluster binding. Cys-11 carries the post-translational modification Cysteine methyl disulfide. Cys-14 lines the [3Fe-4S] cluster pocket. Cys-18 and Cys-42 are oxidised to a cystine. Cys-50 is a binding site for [3Fe-4S] cluster.

In terms of assembly, homodimer (ferredoxin I) or homotetramer (ferredoxin II). [3Fe-4S] cluster is required as a cofactor. It depends on [4Fe-4S] cluster as a cofactor.

Ferredoxins are iron-sulfur proteins that transfer electrons in a wide variety of metabolic reactions. In Megalodesulfovibrio gigas (Desulfovibrio gigas), this protein is Ferredoxin-2.